Here is a 387-residue protein sequence, read N- to C-terminus: Succinate--CoA ligase [ADP-forming] subunit beta (387 aa).

The ATP-grasp domain maps to 9-236; the sequence is RDLFESYGVP…AAAADPLEAK (228 aa). ATP is bound by residues lysine 45, 52–54, alanine 94, and glutamate 99; that span reads GRG. Residues asparagine 191 and aspartate 205 each contribute to the Mg(2+) site. Substrate contacts are provided by residues asparagine 256 and 318-320; that span reads GIT.

It belongs to the succinate/malate CoA ligase beta subunit family. As to quaternary structure, heterotetramer of two alpha and two beta subunits. It depends on Mg(2+) as a cofactor.

It carries out the reaction succinate + ATP + CoA = succinyl-CoA + ADP + phosphate. The catalysed reaction is GTP + succinate + CoA = succinyl-CoA + GDP + phosphate. The protein operates within carbohydrate metabolism; tricarboxylic acid cycle; succinate from succinyl-CoA (ligase route): step 1/1. Functionally, succinyl-CoA synthetase functions in the citric acid cycle (TCA), coupling the hydrolysis of succinyl-CoA to the synthesis of either ATP or GTP and thus represents the only step of substrate-level phosphorylation in the TCA. The beta subunit provides nucleotide specificity of the enzyme and binds the substrate succinate, while the binding sites for coenzyme A and phosphate are found in the alpha subunit. The sequence is that of Succinate--CoA ligase [ADP-forming] subunit beta from Clavibacter michiganensis subsp. michiganensis (strain NCPPB 382).